Here is a 430-residue protein sequence, read N- to C-terminus: GTPase Obg (430 aa).

One can recognise an Obg domain in the interval 1-158; it reads MFIDKAKIYL…LTVVLELKLI (158 aa). The OBG-type G domain occupies 159–330; sequence ADVGLVGFPN…LLSYVSKRLK (172 aa). GTP-binding positions include 165–172, 190–194, 212–215, 282–285, and 311–313; these read GFPNVGKS, FTTLT, DIPG, NKTD, and SAA. Ser-172 and Thr-192 together coordinate Mg(2+). In terms of domain architecture, OCT spans 351 to 430; sequence KYEETEDKYH…MYSVEFEYFN (80 aa).

The protein belongs to the TRAFAC class OBG-HflX-like GTPase superfamily. OBG GTPase family. Monomer. The cofactor is Mg(2+).

The protein resides in the cytoplasm. An essential GTPase which binds GTP, GDP and possibly (p)ppGpp with moderate affinity, with high nucleotide exchange rates and a fairly low GTP hydrolysis rate. Plays a role in control of the cell cycle, stress response, ribosome biogenesis and in those bacteria that undergo differentiation, in morphogenesis control. The polypeptide is GTPase Obg (Alkaliphilus oremlandii (strain OhILAs) (Clostridium oremlandii (strain OhILAs))).